The sequence spans 247 residues: 2,3-bisphosphoglycerate-dependent phosphoglycerate mutase (247 aa).

Substrate-binding positions include Arg-8–Asn-15, Thr-21–Gly-22, Arg-60, Glu-87–Tyr-90, Lys-98, Arg-114–Arg-115, and Gly-183–Asn-184. The active-site Tele-phosphohistidine intermediate is His-9. The Proton donor/acceptor role is filled by Glu-87.

The protein belongs to the phosphoglycerate mutase family. BPG-dependent PGAM subfamily.

It catalyses the reaction (2R)-2-phosphoglycerate = (2R)-3-phosphoglycerate. It participates in carbohydrate degradation; glycolysis; pyruvate from D-glyceraldehyde 3-phosphate: step 3/5. In terms of biological role, catalyzes the interconversion of 2-phosphoglycerate and 3-phosphoglycerate. This chain is 2,3-bisphosphoglycerate-dependent phosphoglycerate mutase, found in Prosthecochloris aestuarii (strain DSM 271 / SK 413).